The sequence spans 404 residues: Serine/threonine transporter SstT (404 aa).

Transmembrane regions (helical) follow at residues 17 to 37, 39 to 59, 75 to 95, 138 to 158, 179 to 199, 212 to 232, 287 to 307, and 313 to 333; these read IGIGVVIGVMLGILAPDLTGF, ILGKLFVGGLKAIAPLLVFAL, MTLIIVLYLFGTFASALVAVL, ALATANYIGVLSWAIIFGLAL, IVVWIINLAPIGIMSLVFTTI, FLILVLVGTMVFVALVVNPLI, IPLGATINMGGAAITINVLTL, and FGIPIDFLTALLLSVVAAVSA.

Belongs to the dicarboxylate/amino acid:cation symporter (DAACS) (TC 2.A.23) family.

It is found in the cell membrane. It catalyses the reaction L-serine(in) + Na(+)(in) = L-serine(out) + Na(+)(out). The catalysed reaction is L-threonine(in) + Na(+)(in) = L-threonine(out) + Na(+)(out). Involved in the import of serine and threonine into the cell, with the concomitant import of sodium (symport system). This Streptococcus pyogenes serotype M2 (strain MGAS10270) protein is Serine/threonine transporter SstT.